Here is an 815-residue protein sequence, read N- to C-terminus: MLPSSICSMGQIPRTSPHYYGMLPKQMSKGHPPMVTRAVGGVEKGEVGGNVRSLQVMHSKELQAKIRKQLQRVELSPSLYDTAWVAMVPERSSSQAPCYPQCIEWILQNQHDDGSWGINSSSLSVNKDILLSTLACVVALKKWNAGSYHIKRGLNFVGRNFSVAMDVQNIAPVGFNVTFSGLITLASGMGLQLPVWQTDIDEIFHLRKIELERDSGGTISARKAFMAYVAEGFGSLQDWDQVMAYQRKNGSLFNSPSTTAAAAIHTFNDRTLNYLDSLTNKFGGPVPAMYPQNIYSQLCTVDALERTGISQKFAREIRDILDTTYRSWLHNEEEVMLDIPTCAMAFRLLRTHGYDITSDEMAHFSEQSSFDDSIHGYLNDTKTLLELFKTSQIRFSCEDLVLENIGTWSAKLLKQQLLSNKLSTSAQSEVEYVLKFPLHSTLDRLEHRRNIEQFKVEGSKVLKSGYCGSHSNEEILALAVDYFHSSQSVYQQELKYFESWVKQCRLDELKFARVMPLIVHFSSAATIFAPELADARMVLSQTCMLITVYDDFFDCPEISREEKENYIALIEKWDNHAEIGFCSKNVEIVFYAVYNTYKQIGEKAALKQNRSIMDQLVEDLVSSAKAMMVEADWTATKYIPATMEEYMSNAEVSGAFASFVCPPLYFLGLKLSEEDVKSHEYTQLLKLTNVIGRLQNDSQTYRKEILAGKVNSVLLRALTDSGNTSPESIEAAKEIVNRDAESSMVEMRSLVFSEGGPIPRPCKDRFWEMCKIVFYFYSEDDAYRTPKETMSSARAVILDPLRLIPPPSCPETLSS.

Residues 1–38 (MLPSSICSMGQIPRTSPHYYGMLPKQMSKGHPPMVTRA) constitute a chloroplast transit peptide. Residues D550, D554, N696, T700, and E704 each coordinate Mg(2+). The DDXXD motif motif lies at 550-554 (DDFFD).

This sequence belongs to the terpene synthase family. Mg(2+) serves as cofactor.

The protein localises to the plastid. It is found in the chloroplast. The catalysed reaction is ent-copalyl diphosphate = ent-sandaracopimara-8(14),15-diene + diphosphate. It carries out the reaction 9alpha-copalyl diphosphate = (12E)-9alpha-labda-8(17),12,14-triene + diphosphate. Involved in the biosynthesis of oryzalexin A-F phytoalexins. Catalyzes the conversion of ent-copalyl diphosphate to the phytoalexin precursor ent-sandaracopimaradiene. The polypeptide is Ent-sandaracopimara-8(14),15-diene synthase, chloroplastic (Oryza sativa subsp. japonica (Rice)).